Here is a 307-residue protein sequence, read N- to C-terminus: MVEPMNWISEVVRPRIKTLFKRETPENLWVKCPDTGQMVFHKEVEQNHWVIPGSEHHLKMSATARLKMMFDEGTWIDVPLPEVPADPLKFRDEKRYVDRLKEARAKTGMPDAFKIGFGRVGSLPMTIAAQEFGFMAGSLGMAGGEAFVRGAETALEKRTPYVLFAASGGARMQEGILSLMQMPRTTVAVRRLRAARLPYIVVLTNPTTGGVTASYAMLGDVHLAEPGALICFAGPRVIEQTIREKLPDGFQRAEYLREHGMVDQVVHRHQLKETISRLCGLLMDVRRTPQPGTAPEPTTPEPLPNAA.

The region spanning 28–297 (LWVKCPDTGQ…TPQPGTAPEP (270 aa)) is the CoA carboxyltransferase N-terminal domain. The disordered stretch occupies residues 286-307 (RRTPQPGTAPEPTTPEPLPNAA). Residues 292-307 (GTAPEPTTPEPLPNAA) show a composition bias toward pro residues.

Belongs to the AccD/PCCB family. Acetyl-CoA carboxylase is a heterohexamer composed of biotin carboxyl carrier protein (AccB), biotin carboxylase (AccC) and two subunits each of ACCase subunit alpha (AccA) and ACCase subunit beta (AccD).

It is found in the cytoplasm. It carries out the reaction N(6)-carboxybiotinyl-L-lysyl-[protein] + acetyl-CoA = N(6)-biotinyl-L-lysyl-[protein] + malonyl-CoA. Its pathway is lipid metabolism; malonyl-CoA biosynthesis; malonyl-CoA from acetyl-CoA: step 1/1. Its function is as follows. Component of the acetyl coenzyme A carboxylase (ACC) complex. Biotin carboxylase (BC) catalyzes the carboxylation of biotin on its carrier protein (BCCP) and then the CO(2) group is transferred by the transcarboxylase to acetyl-CoA to form malonyl-CoA. The protein is Acetyl-coenzyme A carboxylase carboxyl transferase subunit beta of Methylorubrum extorquens (strain CM4 / NCIMB 13688) (Methylobacterium extorquens).